The following is a 222-amino-acid chain: uncharacterized protein (222 aa).

The next 2 helical transmembrane spans lie at 22–42 (IRVI…FLYI) and 189–209 (AICL…FCLV).

The protein resides in the cell membrane. This is an uncharacterized protein from Escherichia coli (strain K12).